The sequence spans 162 residues: RNA pyrophosphohydrolase (162 aa).

The Nudix hydrolase domain occupies 7–149; it reads EYRPCVGIML…KKEVYKKVIE (143 aa). Residues 40-61 carry the Nudix box motif; sequence GGVDEGEELEQAALRELLEEVG.

It belongs to the Nudix hydrolase family. RppH subfamily. A divalent metal cation serves as cofactor.

Its function is as follows. Accelerates the degradation of transcripts by removing pyrophosphate from the 5'-end of triphosphorylated RNA, leading to a more labile monophosphorylated state that can stimulate subsequent ribonuclease cleavage. The chain is RNA pyrophosphohydrolase from Wolbachia pipientis subsp. Culex pipiens (strain wPip).